Consider the following 1015-residue polypeptide: Putative calcium-transporting ATPase 7, plasma membrane-type (1015 aa).

N-acetylmethionine is present on methionine 1. Residues 1 to 161 are Cytoplasmic-facing; it reads MESYLNSNFD…NKFAESELRS (161 aa). Residues 20–31 form an interaction with calmodulin region; it reads VLEKWRNLCSVV. Serine 45 carries the post-translational modification Phosphoserine; by CPK. A helical transmembrane segment spans residues 162–182; the sequence is FWVFVWEALQDMTLMILGVCA. Over 183-200 the chain is Lumenal; the sequence is FVSLIVGIATEGWPQGSH. The helical transmembrane segment at 201–221 threads the bilayer; that stretch reads DGLGIVASILLVVFVTATSDY. Over 222 to 349 the chain is Cytoplasmic; sequence RQSLQFRDLD…DDETPLQVKL (128 aa). A helical membrane pass occupies residues 350 to 369; that stretch reads NGVATIIGKIGLSFAIVTFA. Topologically, residues 370–399 are lumenal; sequence VLVQGMFMRKLSLGPHWWWSGDDALELLEY. A helical transmembrane segment spans residues 400–417; that stretch reads FAIAVTIVVVAVPEGLPL. The Cytoplasmic segment spans residues 418 to 811; it reads AVTLSLAFAM…KWGRSVYINI (394 aa). Aspartate 455 acts as the 4-aspartylphosphate intermediate in catalysis. Mg(2+)-binding residues include aspartate 756 and aspartate 760. Residues 812–830 form a helical membrane-spanning segment; the sequence is QKFVQFQLTVNVVALIVNF. Residues 831 to 841 lie on the Lumenal side of the membrane; the sequence is SSACLTGSAPL. The chain crosses the membrane as a helical span at residues 842–862; the sequence is TAVQLLWVNMIMDTLGALALA. Residues 863–882 are Cytoplasmic-facing; the sequence is TEPPNNELMKRMPVGRRGNF. Residues 883–905 form a helical membrane-spanning segment; the sequence is ITNAMWRNILGQAVYQFIIIWIL. Over 906–917 the chain is Lumenal; that stretch reads QAKGKSMFGLVG. The helical transmembrane segment at 918 to 939 threads the bilayer; it reads SDSTLVLNTLIFNCFVFCQVFN. Residues 940 to 957 are Cytoplasmic-facing; that stretch reads EVSSREMEEIDVFKGILD. Residues 958 to 979 form a helical membrane-spanning segment; it reads NYVFVVVIGATVFFQIIIIEFL. The Lumenal portion of the chain corresponds to 980–989; sequence GTFASTTPLT. A helical transmembrane segment spans residues 990–1011; that stretch reads IVQWFFSIFVGFLGMPIAAGLK. At 1012–1015 the chain is on the cytoplasmic side; sequence KIPV.

It belongs to the cation transport ATPase (P-type) (TC 3.A.3) family. Type IIB subfamily.

It is found in the membrane. The enzyme catalyses Ca(2+)(in) + ATP + H2O = Ca(2+)(out) + ADP + phosphate + H(+). Its activity is regulated as follows. Activated by calmodulin. Its function is as follows. This magnesium-dependent enzyme catalyzes the hydrolysis of ATP coupled with the translocation of calcium from the cytosol out of the cell or into organelles. This Arabidopsis thaliana (Mouse-ear cress) protein is Putative calcium-transporting ATPase 7, plasma membrane-type (ACA7).